A 209-amino-acid polypeptide reads, in one-letter code: Imidazole glycerol phosphate synthase subunit HisH (209 aa).

A Glutamine amidotransferase type-1 domain is found at 1 to 205; the sequence is MIAIIDYGMG…KGVVETWKSS (205 aa). Catalysis depends on cysteine 79, which acts as the Nucleophile. Catalysis depends on residues histidine 180 and glutamate 182.

In terms of assembly, heterodimer of HisH and HisF.

It is found in the cytoplasm. It catalyses the reaction 5-[(5-phospho-1-deoxy-D-ribulos-1-ylimino)methylamino]-1-(5-phospho-beta-D-ribosyl)imidazole-4-carboxamide + L-glutamine = D-erythro-1-(imidazol-4-yl)glycerol 3-phosphate + 5-amino-1-(5-phospho-beta-D-ribosyl)imidazole-4-carboxamide + L-glutamate + H(+). The catalysed reaction is L-glutamine + H2O = L-glutamate + NH4(+). It participates in amino-acid biosynthesis; L-histidine biosynthesis; L-histidine from 5-phospho-alpha-D-ribose 1-diphosphate: step 5/9. IGPS catalyzes the conversion of PRFAR and glutamine to IGP, AICAR and glutamate. The HisH subunit catalyzes the hydrolysis of glutamine to glutamate and ammonia as part of the synthesis of IGP and AICAR. The resulting ammonia molecule is channeled to the active site of HisF. This is Imidazole glycerol phosphate synthase subunit HisH from Bacillus thuringiensis (strain Al Hakam).